The primary structure comprises 260 residues: CD40 ligand (260 aa).

At 1–22 (MIETYSQTAPRSVATGPPVSMK) the chain is on the cytoplasmic side. A helical; Signal-anchor for type II membrane protein transmembrane segment spans residues 23–46 (IFMYLLTVFLITQMIGSALFAVYL). Residues 47 to 260 (HRRLDKIEDE…GFTSFGLLKL (214 aa)) lie on the Extracellular side of the membrane. The THD domain maps to 121–260 (IAAHVISEAS…GFTSFGLLKL (140 aa)). A disulfide bond links C177 and C217. N239 is a glycosylation site (N-linked (GlcNAc...) asparagine).

It belongs to the tumor necrosis factor family. In terms of assembly, homotrimer. Interacts with CD28. CD40 ligand, soluble form: Exists as either a monomer or a homotrimer. Forms a ternary complex between CD40 and integrins for CD40-CD40LG signaling. Post-translationally, the soluble form derives from the membrane form by proteolytic processing.

Its subcellular location is the cell membrane. It localises to the cell surface. It is found in the secreted. Cytokine that acts as a ligand to CD40/TNFRSF5. Costimulates T-cell proliferation and cytokine production. Its cross-linking on T-cells generates a costimulatory signal which enhances the production of IL4 and IL10 in conjunction with the TCR/CD3 ligation and CD28 costimulation. Induces the activation of NF-kappa-B. Induces the activation of kinases MAPK8 and PAK2 in T-cells. Mediates B-cell proliferation in the absence of co-stimulus as well as IgE production in the presence of IL4. Involved in immunoglobulin class switching. Its function is as follows. Acts as a ligand for integrins, specifically ITGA5:ITGB1 and ITGAV:ITGB3; both integrins and the CD40 receptor are required for activation of CD40-CD40LG signaling, which have cell-type dependent effects, such as B-cell activation, NF-kappa-B signaling and anti-apoptotic signaling. This chain is CD40 ligand (CD40LG), found in Canis lupus familiaris (Dog).